The chain runs to 480 residues: Protein nucleotidyltransferase YdiU (480 aa).

ATP is bound by residues glycine 86, glycine 88, arginine 89, lysine 109, aspartate 121, glycine 122, arginine 172, and arginine 179. Aspartate 248 serves as the catalytic Proton acceptor. Asparagine 249 and aspartate 258 together coordinate Mg(2+). Aspartate 258 is an ATP binding site.

It belongs to the SELO family. Mg(2+) serves as cofactor. Mn(2+) is required as a cofactor.

It catalyses the reaction L-seryl-[protein] + ATP = 3-O-(5'-adenylyl)-L-seryl-[protein] + diphosphate. It carries out the reaction L-threonyl-[protein] + ATP = 3-O-(5'-adenylyl)-L-threonyl-[protein] + diphosphate. The catalysed reaction is L-tyrosyl-[protein] + ATP = O-(5'-adenylyl)-L-tyrosyl-[protein] + diphosphate. The enzyme catalyses L-histidyl-[protein] + UTP = N(tele)-(5'-uridylyl)-L-histidyl-[protein] + diphosphate. It catalyses the reaction L-seryl-[protein] + UTP = O-(5'-uridylyl)-L-seryl-[protein] + diphosphate. It carries out the reaction L-tyrosyl-[protein] + UTP = O-(5'-uridylyl)-L-tyrosyl-[protein] + diphosphate. Functionally, nucleotidyltransferase involved in the post-translational modification of proteins. It can catalyze the addition of adenosine monophosphate (AMP) or uridine monophosphate (UMP) to a protein, resulting in modifications known as AMPylation and UMPylation. This chain is Protein nucleotidyltransferase YdiU, found in Salmonella agona (strain SL483).